Here is a 176-residue protein sequence, read N- to C-terminus: Ferritin heavy polypeptide-like 17E (176 aa).

Residues Gln10–Gly159 form the Ferritin-like diiron domain. Positions 27, 107, and 141 each coordinate Fe cation.

The protein belongs to the ferritin family. Expressed in the testes and spermatogonia.

In Mus musculus (Mouse), this protein is Ferritin heavy polypeptide-like 17E.